Consider the following 240-residue polypeptide: Pyridoxine 5'-phosphate synthase (240 aa).

Asn-7 is a 3-amino-2-oxopropyl phosphate binding site. 9–10 is a binding site for 1-deoxy-D-xylulose 5-phosphate; it reads DH. Arg-18 is a binding site for 3-amino-2-oxopropyl phosphate. The active-site Proton acceptor is His-43. 1-deoxy-D-xylulose 5-phosphate is bound by residues Arg-45 and His-50. Glu-70 acts as the Proton acceptor in catalysis. Residue Thr-100 coordinates 1-deoxy-D-xylulose 5-phosphate. His-191 acts as the Proton donor in catalysis. 3-amino-2-oxopropyl phosphate contacts are provided by residues Gly-192 and 213-214; that span reads GH.

The protein belongs to the PNP synthase family. Homooctamer; tetramer of dimers.

The protein localises to the cytoplasm. It catalyses the reaction 3-amino-2-oxopropyl phosphate + 1-deoxy-D-xylulose 5-phosphate = pyridoxine 5'-phosphate + phosphate + 2 H2O + H(+). It participates in cofactor biosynthesis; pyridoxine 5'-phosphate biosynthesis; pyridoxine 5'-phosphate from D-erythrose 4-phosphate: step 5/5. Catalyzes the complicated ring closure reaction between the two acyclic compounds 1-deoxy-D-xylulose-5-phosphate (DXP) and 3-amino-2-oxopropyl phosphate (1-amino-acetone-3-phosphate or AAP) to form pyridoxine 5'-phosphate (PNP) and inorganic phosphate. This Trichodesmium erythraeum (strain IMS101) protein is Pyridoxine 5'-phosphate synthase.